We begin with the raw amino-acid sequence, 262 residues long: Capsid protein (262 aa).

Residues 183–262 are disordered; sequence APTIEAITRP…SHHRSPSPRK (80 aa). The short motif at 215 to 233 is the Bipartite nuclear localization signal element; the sequence is RRRKVKTTFVYGRRRSKSR. A compositionally biased stretch (basic residues) spans 215-234; that stretch reads RRRKVKTTFVYGRRRSKSRE. Ser-232, Ser-239, and Ser-245 each carry phosphoserine; by host. The segment covering 252-262 has biased composition (basic residues); that stretch reads SSHHRSPSPRK. Positions 254–260 are RNA binding; that stretch reads HHRSPSP.

It belongs to the avihepadnavirus core antigen family. As to quaternary structure, homodimerizes, then multimerizes.

The protein localises to the virion. Its subcellular location is the host cytoplasm. Its function is as follows. Self assembles to form an icosahedral capsid. Most capsid appear to be large particles with an icosahedral symmetry of T=4 and consist of 240 copies of capsid protein, though a fraction forms smaller T=3 particles consisting of 180 capsid proteins. Entering capsid are transported along microtubules to the nucleus. Phosphorylation of the capsid is thought to induce exposure of nuclear localization signal in the C-terminal portion of the capsid protein that allows binding to the nuclear pore complex via the importin (karyopherin-) alpha and beta. Capsids are imported in intact form through the nuclear pore into the nuclear basket, where it probably binds NUP153. Only capsids that contain the mature viral genome can release the viral DNA and capsid protein into the nucleoplasm. Immature capsids get stucked in the basket. Capsids encapsulate the pre-genomic RNA and the P protein. Pre-genomic RNA is reverse transcribed into DNA while the capsid is still in the cytoplasm. The capsid can then either be directed to the nucleus, providing more genome for transcription, or bud through the endoplasmic reticulum to provide new virions. This Anas (ducks) protein is Capsid protein (C).